The primary structure comprises 174 residues: Peptide methionine sulfoxide reductase MsrA (174 aa).

Residue Cys-10 is part of the active site.

This sequence belongs to the MsrA Met sulfoxide reductase family.

The catalysed reaction is L-methionyl-[protein] + [thioredoxin]-disulfide + H2O = L-methionyl-(S)-S-oxide-[protein] + [thioredoxin]-dithiol. The enzyme catalyses [thioredoxin]-disulfide + L-methionine + H2O = L-methionine (S)-S-oxide + [thioredoxin]-dithiol. Has an important function as a repair enzyme for proteins that have been inactivated by oxidation. Catalyzes the reversible oxidation-reduction of methionine sulfoxide in proteins to methionine. This chain is Peptide methionine sulfoxide reductase MsrA, found in Paenarthrobacter aurescens (strain TC1).